The sequence spans 143 residues: MRVEAVVEVRLTEDKKKVLKALENVFTPVNIREEPSDVGVVLISTCDGHKCLEKLRGAIWRQGIQDAARSVISKGVVGEDTVIFSINKQAAYVGVVSFVTEPGESPLGPITFTVKTSNVRQFIDWLAPRTYRGKVYYEAPPPD.

It belongs to the UPF0201 family.

In Pyrobaculum calidifontis (strain DSM 21063 / JCM 11548 / VA1), this protein is UPF0201 protein Pcal_0593.